We begin with the raw amino-acid sequence, 58 residues long: Small ribosomal subunit protein bS21 (58 aa).

Belongs to the bacterial ribosomal protein bS21 family.

This is Small ribosomal subunit protein bS21 from Picosynechococcus sp. (strain ATCC 27264 / PCC 7002 / PR-6) (Agmenellum quadruplicatum).